The following is a 598-amino-acid chain: Elongation factor 4 (598 aa).

In terms of domain architecture, tr-type G spans 2-184 (NNIRNFAIIA…AIVAKLPAPQ (183 aa)). GTP-binding positions include 14–19 (DHGKST) and 131–134 (NKVD).

This sequence belongs to the TRAFAC class translation factor GTPase superfamily. Classic translation factor GTPase family. LepA subfamily.

Its subcellular location is the cell membrane. The enzyme catalyses GTP + H2O = GDP + phosphate + H(+). Functionally, required for accurate and efficient protein synthesis under certain stress conditions. May act as a fidelity factor of the translation reaction, by catalyzing a one-codon backward translocation of tRNAs on improperly translocated ribosomes. Back-translocation proceeds from a post-translocation (POST) complex to a pre-translocation (PRE) complex, thus giving elongation factor G a second chance to translocate the tRNAs correctly. Binds to ribosomes in a GTP-dependent manner. The polypeptide is Elongation factor 4 (Wolbachia sp. subsp. Drosophila simulans (strain wRi)).